A 207-amino-acid polypeptide reads, in one-letter code: Ankyrin repeat-containing protein P1E11.10 (207 aa).

ANK repeat units lie at residues 36-65 (NGYTPIHAAVSYGHSDLLKILVERGGDINI) and 69-98 (DGETPLFVCEKLEIAHDLINQYNADTTVKN).

It is found in the cytoplasm. Its subcellular location is the nucleus. This chain is Ankyrin repeat-containing protein P1E11.10, found in Schizosaccharomyces pombe (strain 972 / ATCC 24843) (Fission yeast).